The chain runs to 1023 residues: 2-oxoglutarate dehydrogenase complex component E1 (1023 aa).

Residues 1–40 (MFHLRTCAAKLRPLTASQTVKTFSQNRPAAARTFQQIRCY) constitute a mitochondrion transit peptide. The residue at position 74 (lysine 74) is an N6-succinyllysine. A Phosphoserine modification is found at serine 100. Histidine 143, aspartate 156, and aspartate 158 together coordinate Ca(2+). A thiamine diphosphate-binding site is contributed by arginine 312. Lysine 401 carries the N6-acetyllysine modification. Positions 411, 444, and 446 each coordinate thiamine diphosphate. Residues aspartate 411, asparagine 444, and isoleucine 446 each contribute to the Mg(2+) site. Residue lysine 534 forms a Glycyl lysine isopeptide (Lys-Gly) (interchain with G-Cter in ubiquitin) linkage. An N6-succinyllysine modification is found at lysine 564. Glutamine 676 contributes to the thiamine diphosphate binding site. Residue lysine 970 is modified to N6-acetyllysine.

This sequence belongs to the alpha-ketoglutarate dehydrogenase family. Homodimer. The 2-oxoglutarate dehydrogenase complex is composed of OGDH (2-oxoglutarate dehydrogenase; E1), DLST (dihydrolipoamide succinyltransferase; E2), DLD (dihydrolipoamide dehydrogenase; E3), and the assembly factor KGD4. It contains multiple copies of the three enzymatic components (E1, E2 and E3). In the nucleus, the 2-oxoglutarate dehydrogenase complex associates with KAT2A. Interacts with ABHD11; this interaction maintains the functional lipoylation of the 2-oxoglutarate dehydrogenase complex. The cofactor is thiamine diphosphate. Requires Mg(2+) as cofactor.

Its subcellular location is the mitochondrion. The protein resides in the nucleus. The enzyme catalyses N(6)-[(R)-lipoyl]-L-lysyl-[protein] + 2-oxoglutarate + H(+) = N(6)-[(R)-S(8)-succinyldihydrolipoyl]-L-lysyl-[protein] + CO2. Its activity is regulated as follows. Calcium ions and ADP stimulate, whereas ATP and NADH reduce catalytic activity. Functionally, 2-oxoglutarate dehydrogenase (E1o) component of the 2-oxoglutarate dehydrogenase complex (OGDHC). Participates in the first step, rate limiting for the overall conversion of 2-oxoglutarate to succinyl-CoA and CO(2) catalyzed by the whole OGDHC. Catalyzes the irreversible decarboxylation of 2-oxoglutarate (alpha-ketoglutarate) via the thiamine diphosphate (ThDP) cofactor and subsequent transfer of the decarboxylated acyl intermediate on an oxidized dihydrolipoyl group that is covalently amidated to the E2 enzyme (dihydrolipoyllysine-residue succinyltransferase or DLST). Plays a key role in the Krebs (citric acid) cycle, which is a common pathway for oxidation of fuel molecules, including carbohydrates, fatty acids, and amino acids. Can catalyze the decarboxylation of 2-oxoadipate in vitro, but at a much lower rate than 2-oxoglutarate. Mainly active in the mitochondrion. A fraction of the 2-oxoglutarate dehydrogenase complex also localizes in the nucleus and is required for lysine succinylation of histones: associates with KAT2A on chromatin and provides succinyl-CoA to histone succinyltransferase KAT2A. This Homo sapiens (Human) protein is 2-oxoglutarate dehydrogenase complex component E1.